The primary structure comprises 274 residues: Large ribosomal subunit protein uL2 (274 aa).

2 disordered regions span residues 37–60 (QHQKSGRNNNGHITTRHKGGGHKH) and 224–252 (AMNPIDHPHGGGEGRTGEGRHAVDPWGNL). The segment covering 50-60 (TTRHKGGGHKH) has biased composition (basic residues). Positions 229-246 (DHPHGGGEGRTGEGRHAV) are enriched in basic and acidic residues.

It belongs to the universal ribosomal protein uL2 family. Part of the 50S ribosomal subunit. Forms a bridge to the 30S subunit in the 70S ribosome.

In terms of biological role, one of the primary rRNA binding proteins. Required for association of the 30S and 50S subunits to form the 70S ribosome, for tRNA binding and peptide bond formation. It has been suggested to have peptidyltransferase activity; this is somewhat controversial. Makes several contacts with the 16S rRNA in the 70S ribosome. The sequence is that of Large ribosomal subunit protein uL2 from Paracidovorax citrulli (strain AAC00-1) (Acidovorax citrulli).